Reading from the N-terminus, the 344-residue chain is Methionine import ATP-binding protein MetN (344 aa).

The 240-residue stretch at 2–241 folds into the ABC transporter domain; the sequence is IELQGLSQRF…PQHDVTRAMI (240 aa). 38-45 lines the ATP pocket; the sequence is GRSGAGKS.

The protein belongs to the ABC transporter superfamily. Methionine importer (TC 3.A.1.24) family. As to quaternary structure, the complex is composed of two ATP-binding proteins (MetN), two transmembrane proteins (MetI) and a solute-binding protein (MetQ).

The protein resides in the cell inner membrane. It carries out the reaction L-methionine(out) + ATP + H2O = L-methionine(in) + ADP + phosphate + H(+). The catalysed reaction is D-methionine(out) + ATP + H2O = D-methionine(in) + ADP + phosphate + H(+). Functionally, part of the ABC transporter complex MetNIQ involved in methionine import. Responsible for energy coupling to the transport system. This Cupriavidus necator (strain ATCC 17699 / DSM 428 / KCTC 22496 / NCIMB 10442 / H16 / Stanier 337) (Ralstonia eutropha) protein is Methionine import ATP-binding protein MetN.